Reading from the N-terminus, the 325-residue chain is Beta-ketoacyl-[acyl-carrier-protein] synthase III (325 aa).

Residues Cys-119 and His-252 contribute to the active site. The tract at residues 253–257 (QANIR) is ACP-binding. Asn-282 is an active-site residue.

The protein belongs to the thiolase-like superfamily. FabH family. Homodimer.

Its subcellular location is the cytoplasm. It carries out the reaction malonyl-[ACP] + acetyl-CoA + H(+) = 3-oxobutanoyl-[ACP] + CO2 + CoA. It functions in the pathway lipid metabolism; fatty acid biosynthesis. Its function is as follows. Catalyzes the condensation reaction of fatty acid synthesis by the addition to an acyl acceptor of two carbons from malonyl-ACP. Catalyzes the first condensation reaction which initiates fatty acid synthesis and may therefore play a role in governing the total rate of fatty acid production. Possesses both acetoacetyl-ACP synthase and acetyl transacylase activities. Its substrate specificity determines the biosynthesis of branched-chain and/or straight-chain of fatty acids. This is Beta-ketoacyl-[acyl-carrier-protein] synthase III from Acidovorax ebreus (strain TPSY) (Diaphorobacter sp. (strain TPSY)).